The sequence spans 257 residues: AA9 family lytic polysaccharide monooxygenase U (257 aa).

Positions 1–19 (MKLYLAAFLGAVATPGAFA) are cleaved as a signal peptide. Histidine 20 provides a ligand contact to Cu(2+). 2 N-linked (GlcNAc...) asparagine glycosylation sites follow: asparagine 29 and asparagine 71. The cysteines at positions 74 and 194 are disulfide-linked. Histidine 113 serves as a coordination point for Cu(2+). Asparagine 161 carries N-linked (GlcNAc...) asparagine glycosylation. Residue glutamine 189 coordinates O2. A Cu(2+)-binding site is contributed by tyrosine 191.

It belongs to the polysaccharide monooxygenase AA9 family. Cu(2+) is required as a cofactor.

Its subcellular location is the secreted. The enzyme catalyses [(1-&gt;4)-beta-D-glucosyl]n+m + reduced acceptor + O2 = 4-dehydro-beta-D-glucosyl-[(1-&gt;4)-beta-D-glucosyl]n-1 + [(1-&gt;4)-beta-D-glucosyl]m + acceptor + H2O.. Lytic polysaccharide monooxygenase (LPMO) that depolymerizes crystalline and amorphous polysaccharides via the oxidation of scissile alpha- or beta-(1-4)-glycosidic bonds, yielding C1 and C4 oxidation products. Catalysis by LPMOs requires the reduction of the active-site copper from Cu(II) to Cu(I) by a reducing agent and H(2)O(2) or O(2) as a cosubstrate. Shows no activity on wheat arabinoxylan, konjac glucomannan, acetylated spruce galactoglucomannan, or cellopentaose. The chain is AA9 family lytic polysaccharide monooxygenase U from Thermothielavioides terrestris (strain ATCC 38088 / NRRL 8126) (Thielavia terrestris).